The following is a 297-amino-acid chain: MIDSEAHEKRPPILTSSKQDISPHITNVGEMKHYLCGCCAAFNNVAITYPIQKVLFRQQLYGIKTRDAVLQLRRDGFRNLYRGILPPLMQKTTTLALMFGLYEDLSCLLRKHVRAPEFATHGVAAVLAGTAEAIFTPLERVQTLLQNHKHHDKFTNTYQAFKALKCHGIGEYYRGLVPILFRNGLSNVLFFGLRGPIKEHLPTATTHSAHLVNDFIGGGLLGAMLGFLCFPINVVKTRLQSQIGGEFQSFPKVFQKIWLERDRKLINLFRGAHLNYHRSLISWGIINATYEFLLKFI.

3 Solcar repeats span residues 28 to 108 (VGEM…LSCL), 116 to 200 (PEFA…IKEH), and 209 to 296 (AHLV…LLKF). The next 6 membrane-spanning stretches (helical) occupy residues 34-51 (YLCGCCAAFNNVAITYPI), 85-105 (LPPLMQKTTTLALMFGLYEDL), 118-138 (FATHGVAAVLAGTAEAIFTPL), 179-199 (ILFRNGLSNVLFFGLRGPIKE), 215-235 (FIGGGLLGAMLGFLCFPINVV), and 268-289 (LFRGAHLNYHRSLISWGIINAT).

The protein belongs to the mitochondrial carrier (TC 2.A.29) family.

Its subcellular location is the mitochondrion inner membrane. It carries out the reaction NAD(+)(in) = NAD(+)(out). Functionally, mitochondrial membrane carrier protein that mediates the import of NAD(+) into mitochondria. Compared to SLC25A51, SLC25A52-mediated transport is not essential for the import of NAD(+) in mitochondria. The transport mechanism, uniport or antiport, its electrogenicity and substrate selectivity, remain to be elucidated. This chain is Mitochondrial nicotinamide adenine dinucleotide transporter SLC25A52, found in Homo sapiens (Human).